A 257-amino-acid polypeptide reads, in one-letter code: MGPRGRQSPSSPLAPSQGSCFFILFCLRLGASCPQSCQCPDHAGAVAVHCSSRGLQEIPRDIPANTVLLKLDANRISRVPNGAFQHLPQLRELDLSHNAIEAIGPAAFSGLAGGLRLLDLSHNRIRRIPKDALGKLSAKIRLSHNPLHCECALQEALWELKLDPDSVDEIACHTSAQEQFVGKPLIQVLDSGASFCSTHRKTTDVAMLVTMFGWFTMVIAYVVYYVRHNQEDARRHLEYLKSLPSAPVSKEPLSPVP.

An N-terminal signal peptide occupies residues 1-32; the sequence is MGPRGRQSPSSPLAPSQGSCFFILFCLRLGAS. The LRRNT domain maps to 33 to 64; that stretch reads CPQSCQCPDHAGAVAVHCSSRGLQEIPRDIPA. LRR repeat units lie at residues 65 to 86, 89 to 110, and 114 to 135; these read NTVLLKLDANRISRVPNGAFQH, QLRELDLSHNAIEAIGPAAFSG, and GLRLLDLSHNRIRRIPKDALGK. The LRRCT domain maps to 145 to 198; that stretch reads NPLHCECALQEALWELKLDPDSVDEIACHTSAQEQFVGKPLIQVLDSGASFCST. Residues 205 to 225 form a helical membrane-spanning segment; it reads VAMLVTMFGWFTMVIAYVVYY.

It belongs to the LRRC3 family.

The protein localises to the membrane. This is Leucine-rich repeat-containing protein 3 (Lrrc3) from Rattus norvegicus (Rat).